The chain runs to 714 residues: Putative glutamine--fructose-6-phosphate aminotransferase [isomerizing] (714 aa).

C2 acts as the Nucleophile; for GATase activity in catalysis. Positions 2 to 321 constitute a Glutamine amidotransferase type-2 domain; it reads CGIFGYCNFL…DNDIAHIYDG (320 aa). A compositionally biased stretch (polar residues) spans 266–280; the sequence is STTSTFNHGSSTETP. The segment at 266–285 is disordered; it reads STTSTFNHGSSTETPAENGL. SIS domains are found at residues 387 to 526 and 559 to 704; these read WLTE…DLVS and CDKK…VDLP.

It carries out the reaction D-fructose 6-phosphate + L-glutamine = D-glucosamine 6-phosphate + L-glutamate. It functions in the pathway nucleotide-sugar biosynthesis; UDP-N-acetyl-alpha-D-glucosamine biosynthesis; alpha-D-glucosamine 6-phosphate from D-fructose 6-phosphate: step 1/1. Involved in amino sugar synthesis (formation of chitin, supplies the amino sugars of asparagine-linked oligosaccharides of glycoproteins). This is Putative glutamine--fructose-6-phosphate aminotransferase [isomerizing] from Saccharomyces cerevisiae (strain YJM789) (Baker's yeast).